Here is a 441-residue protein sequence, read N- to C-terminus: Trigger factor (441 aa).

Residues 161–246 enclose the PPIase FKBP-type domain; sequence GDQVTIDFVG…VSEVAEQILP (86 aa).

This sequence belongs to the FKBP-type PPIase family. Tig subfamily.

Its subcellular location is the cytoplasm. It carries out the reaction [protein]-peptidylproline (omega=180) = [protein]-peptidylproline (omega=0). Involved in protein export. Acts as a chaperone by maintaining the newly synthesized protein in an open conformation. Functions as a peptidyl-prolyl cis-trans isomerase. This chain is Trigger factor, found in Marinomonas sp. (strain MWYL1).